The chain runs to 428 residues: tRNA(Ile)-lysidine synthase (428 aa).

ATP is bound at residue 25–30 (SGGIDS).

The protein belongs to the tRNA(Ile)-lysidine synthase family.

It is found in the cytoplasm. It carries out the reaction cytidine(34) in tRNA(Ile2) + L-lysine + ATP = lysidine(34) in tRNA(Ile2) + AMP + diphosphate + H(+). Its function is as follows. Ligates lysine onto the cytidine present at position 34 of the AUA codon-specific tRNA(Ile) that contains the anticodon CAU, in an ATP-dependent manner. Cytidine is converted to lysidine, thus changing the amino acid specificity of the tRNA from methionine to isoleucine. The chain is tRNA(Ile)-lysidine synthase from Haemophilus ducreyi (strain 35000HP / ATCC 700724).